Here is a 1314-residue protein sequence, read N- to C-terminus: Synergin gamma (1314 aa).

A coiled-coil region spans residues 115–155 (MQKQFAEEQQKRFEQQQKLLEEERKRRQFEEQKQKLRLLSS). The disordered stretch occupies residues 178 to 199 (GFSRDAKMHPTPASHPKKPGPS). Residues 295–388 (NESLVPDAYK…QFPAAPIPTL (94 aa)) enclose the EH domain. The DFXDF motif 1 motif lies at 457-461 (DFQDF). The tract at residues 460–498 (DFQDASKSGSLDDSFSDFQELPASSKTSNSQHGNSAPSL) is disordered. The segment covering 462–496 (QDASKSGSLDDSFSDFQELPASSKTSNSQHGNSAP) has biased composition (polar residues). S473 carries the phosphoserine modification. Residue K513 is modified to N6-acetyllysine. Residues 518-786 (KGIAADKSSE…ADFHSSKFSS (269 aa)) are interaction with AP1G1. The residue at position 580 (S580) is a Phosphoserine. The interaction with AP1G1, AP1G2 and GGA1 stretch occupies residues 666 to 678 (LADDFGEFSLFGE). The short motif at 690-694 (DFADF) is the DFXDF motif 2 element. S720 is subject to Phosphoserine. K744 is subject to N6-acetyllysine. Phosphoserine occurs at positions 752 and 772. The DFXDF motif 3 motif lies at 775-779 (DFADF). S812, S852, S855, S909, S919, and S935 each carry phosphoserine. Disordered regions lie at residues 972 to 1026 (PQTS…DFGE) and 1073 to 1102 (SLSL…NTLN). Residues 976–990 (EQKEYENRDYKDFTK) show a composition bias toward basic and acidic residues. A compositionally biased stretch (polar residues) spans 1001–1019 (EATCPSPASSGASQETPNE). S1006, S1073, S1075, S1087, and S1098 each carry phosphoserine. At T1100 the chain carries Phosphothreonine.

Self-associates. Interacts with GGA1 (via GAE domain). Interacts with GGA2 and GGA3. Interacts with AP1G1 (via GAE domain), a subunit of adapter protein complex AP-1. Interacts with AP1G2 (via GAE domain) a subunit of adapter protein complex AP-1. Component of the aftiphilin/p200/gamma-synergin complex, at least composed of AFTPH/aftiphilin, HEATR5B/p200a and SYNRG/gamma-synergin, which plays a role in the AP1G1/AP-1-mediated trafficking of transferrin from early to recycling endosomes. Within the complex interacts with AFTPH/aftiphilin and HEATR5B/p200a; the interactions are direct. Interacts (via EH domain) with SCAMP1.

It localises to the cytoplasm. It is found in the golgi apparatus. The protein localises to the trans-Golgi network membrane. The protein resides in the perinuclear region. Its subcellular location is the cytoplasmic vesicle. It localises to the clathrin-coated vesicle. Plays a role in endocytosis and/or membrane trafficking at the trans-Golgi network (TGN). May act by linking the adapter protein complex AP-1 to other proteins. Component of clathrin-coated vesicles. Component of the aftiphilin/p200/gamma-synergin complex, which plays roles in AP1G1/AP-1-mediated protein trafficking including the trafficking of transferrin from early to recycling endosomes, and the membrane trafficking of furin and the lysosomal enzyme cathepsin D between the trans-Golgi network (TGN) and endosomes. This is Synergin gamma from Homo sapiens (Human).